We begin with the raw amino-acid sequence, 605 residues long: Elongation factor 4 (605 aa).

Positions 11–193 constitute a tr-type G domain; that stretch reads KNIRNFSIIA…TLVDVIPAPT (183 aa). GTP contacts are provided by residues 23 to 28 and 140 to 143; these read DHGKST and NKID.

Belongs to the TRAFAC class translation factor GTPase superfamily. Classic translation factor GTPase family. LepA subfamily.

It localises to the cell inner membrane. It catalyses the reaction GTP + H2O = GDP + phosphate + H(+). Required for accurate and efficient protein synthesis under certain stress conditions. May act as a fidelity factor of the translation reaction, by catalyzing a one-codon backward translocation of tRNAs on improperly translocated ribosomes. Back-translocation proceeds from a post-translocation (POST) complex to a pre-translocation (PRE) complex, thus giving elongation factor G a second chance to translocate the tRNAs correctly. Binds to ribosomes in a GTP-dependent manner. In Acinetobacter baumannii (strain SDF), this protein is Elongation factor 4.